The chain runs to 311 residues: Class E basic helix-loop-helix protein 22 (311 aa).

The segment at 22-170 is disordered; the sequence is AKRMESAFRS…GGSKKSKEQK (149 aa). Positions 81–96 are enriched in low complexity; it reads GESASRSSVAESSGGE. The segment covering 125–147 has biased composition (gly residues); sequence AGGGGGGGGGGGGGPGGGGGGGL. The 55-residue stretch at 171–225 folds into the bHLH domain; the sequence is ALRLNINARERRRMHDLNDALDELRAVIPYAHSPSVRKLSKIATLLLAKNYILMQ.

It localises to the nucleus. Its function is as follows. May act as a transcriptional repressor. This chain is Class E basic helix-loop-helix protein 22 (BHLHE22), found in Gallus gallus (Chicken).